Consider the following 808-residue polypeptide: Aminotransferase ALT4 (808 aa).

The protein belongs to the class-II pyridoxal-phosphate-dependent aminotransferase family. BioF subfamily. Requires pyridoxal 5'-phosphate as cofactor.

Its pathway is mycotoxin biosynthesis. Functionally, aminotransferase; part of the gene cluster that mediates the biosynthesis of the host-selective toxins (HSTs) AAL-toxins, sphinganine-analog mycotoxins responsible for Alternaria stem canker on tomato by the tomato pathotype. The biosynthesis starts with the polyketide synthase ALT1-catalyzed C-16 carbon chain assembly from one starter acetyl-CoA unit with malonyl-CoA extender units. ALT1 also selectively transfers methyl groups at the first and the third cycle of chain elongation for AAL toxin. The C-16 polyketide chain is released from the enzyme by a nucleophilic attack of a carbanion, which is derived from R-carbon of glycin by decarboxylation, on the carbonyl carbon of polyketide acyl chain. This step is probably catalyzed by a pyridoxal 5'-phosphate-dependent aminoacyl transferase ALT4. The respective functions of the other enzymes encoded by the cluster have still to be elucidated. The sphingosine N-acyltransferase-like protein ALT7 seems not to act as a resistance/self-tolerance factor against the toxin in the toxin biosynthetic gene cluster, contrary to what is expected. The chain is Aminotransferase ALT4 from Alternaria alternata (Alternaria rot fungus).